Here is an 869-residue protein sequence, read N- to C-terminus: Rho GTPase-activating protein 27 (869 aa).

The region spanning 6-69 (EGDVYVLVEH…PAQYVRELPA (64 aa)) is the SH3 domain. Position 28 is a phosphotyrosine (alanine 28). Residues 104 to 134 (GADGSSAEPRGRASSLCGPARQRTGGQRNSL) are disordered. Phosphoserine is present on residues serine 155, serine 215, and serine 249. 2 disordered regions span residues 208–300 (RCPP…SGES) and 331–401 (ETEE…GWSC). Positions 209–220 (CPPRAESPKQVD) are enriched in basic and acidic residues. Positions 235–250 (RATSPRSAAAPPRLSP) are enriched in low complexity. The WW 1 domain occupies 246 to 280 (PRLSPVWETHTDTGTGRPYYYNPDTGVTTWESPFE). The span at 283-294 (EGTTSPATSRAS) shows a compositional bias: polar residues. Residues 299 to 333 (ESLETEWGQYWDEESRRVFFYNPLTGETAWEDETE) form the WW 2 domain. Residues 345–356 (MQPSLSPRSPGQ) show a composition bias toward polar residues. Position 350 is a phosphoserine (serine 350). A WW 3 domain is found at 414–447 (QFTQEQWVRLEDQHGKPYFYNPEDSSVQWELPQV). Disordered stretches follow at residues 449 to 477 (IPAP…KIKT) and 623 to 642 (EEDV…GLES). 2 positions are modified to phosphoserine: serine 459 and serine 462. A Phosphothreonine modification is found at threonine 464. Serine 469 carries the post-translational modification Phosphoserine. Positions 477–593 (TLDKAGVLHR…WHKAIAEGIS (117 aa)) constitute a PH domain. Serine 632 and serine 636 each carry phosphoserine. A Rho-GAP domain is found at 677-866 (CALAQLCERE…LILHQCADIF (190 aa)).

In terms of assembly, interacts with SH3KBP1/CIN85. In terms of tissue distribution, widely expressed. Highly expressed in kidney, lung, small intestine and thymus.

It is found in the cytoplasm. The protein resides in the membrane. Rho GTPase-activating protein which may be involved in clathrin-mediated endocytosis. GTPase activators for the Rho-type GTPases act by converting them to an inactive GDP-bound state. Has activity toward CDC42 and RAC1. This chain is Rho GTPase-activating protein 27 (Arhgap27), found in Mus musculus (Mouse).